The sequence spans 75 residues: Small integral membrane protein 7-A (75 aa).

Positions 1 to 17 (MIGDLLLFGTLLVNAGA) are cleaved as a signal peptide. Over 18-53 (VLNFKLKKKESQGFGDDLTEATTGDNIREFLLSLRY) the chain is Extracellular. Residues 54–74 (FRIFIALWNIFMMFCMIVLFG) traverse the membrane as a helical segment. S75 is a topological domain (cytoplasmic).

This sequence belongs to the SMIM7 family.

It localises to the membrane. In Xenopus laevis (African clawed frog), this protein is Small integral membrane protein 7-A (smim7-a).